Consider the following 276-residue polypeptide: Small ribosomal subunit protein uS2 (276 aa).

A disordered region spans residues 254-276; it reads LAGATAAAPAEGAVATETTPTEG. The span at 255–276 shows a compositional bias: low complexity; it reads AGATAAAPAEGAVATETTPTEG.

This sequence belongs to the universal ribosomal protein uS2 family.

The chain is Small ribosomal subunit protein uS2 from Mycobacterium ulcerans (strain Agy99).